The chain runs to 140 residues: Class I hydrophobin 1 (140 aa).

The signal sequence occupies residues 1–18 (MKFAAVVVLAAAAAAVSA). Positions 22 to 60 (AQRMARGLPPKAPIRRHGTPADTEKRSHPSSTGGGQCNT) are disordered. Disulfide bonds link C58–C119, C65–C113, C66–C99, and C120–C133.

Belongs to the fungal hydrophobin family. As to quaternary structure, self-assembles to form functional amyloid fibrils called rodlets. Self-assembly into fibrillar rodlets occurs spontaneously at hydrophobic:hydrophilic interfaces and the rodlets further associate laterally to form amphipathic monolayers.

The protein localises to the secreted. The protein resides in the cell wall. Aerial growth, conidiation, and dispersal of filamentous fungi in the environment rely upon a capability of their secreting small amphipathic proteins called hydrophobins (HPBs) with low sequence identity. Class I can self-assemble into an outermost layer of rodlet bundles on aerial cell surfaces, conferring cellular hydrophobicity that supports fungal growth, development and dispersal; whereas Class II form highly ordered films at water-air interfaces through intermolecular interactions but contribute nothing to the rodlet structure. This chain is Class I hydrophobin 1, found in Pisolithus tinctorius (Dead man's foot).